The sequence spans 407 residues: Peptidase T (407 aa).

A Zn(2+)-binding site is contributed by His82. Asp84 is a catalytic residue. Residue Asp143 coordinates Zn(2+). The Proton acceptor role is filled by Glu177. Positions 178, 200, and 382 each coordinate Zn(2+).

The protein belongs to the peptidase M20B family. It depends on Zn(2+) as a cofactor.

It is found in the cytoplasm. The catalysed reaction is Release of the N-terminal residue from a tripeptide.. In terms of biological role, cleaves the N-terminal amino acid of tripeptides. In Streptococcus equi subsp. equi (strain 4047), this protein is Peptidase T.